A 127-amino-acid chain; its full sequence is Small ribosomal subunit protein uS11c (127 aa).

It belongs to the universal ribosomal protein uS11 family. In terms of assembly, part of the 30S ribosomal subunit.

The protein resides in the plastid. It is found in the chloroplast. In Heterosigma akashiwo (strain NIES-293 / 8280G21-1), this protein is Small ribosomal subunit protein uS11c.